Here is an 82-residue protein sequence, read N- to C-terminus: Putative membrane protein insertion efficiency factor (82 aa).

It belongs to the UPF0161 family.

It localises to the cell inner membrane. Functionally, could be involved in insertion of integral membrane proteins into the membrane. This Rickettsia massiliae (strain Mtu5) protein is Putative membrane protein insertion efficiency factor.